Consider the following 34-residue polypeptide: Leader peptide SpeFL (34 aa).

The Ornithine recognition loop motif lies at 10–16; that stretch reads HIRRTTH. Arg-13 is an L-ornithine binding site.

It belongs to the speF operon leader peptide family. As to quaternary structure, binds ornithine in stalled 70S ribosomes, blocking the upper two-thirds of the exit tunnel. Contacts 23S rRNA and ribosomal proteins L4 and L22.

Its function is as follows. A small protein (arrest peptide) encoded upstream of inducible ornithine carboxylase gene (speF) that controls expression of downstream genes (speF and potE) by transcriptional and translational attenuation. Its expression controls transcription and translation of downstream SpeF; translation pausing at low Arg levels on this mRNA prevents premature Rho-dependent transcription termination of speF and also enhances SprF translation by preventing sequestration of its ribosome-binding site. In the presence of high Arg levels translation of this protein allows the formation of an speF mRNA structure that is degraded by RNase G. This is Leader peptide SpeFL from Salmonella typhimurium (strain SL1344).